A 763-amino-acid chain; its full sequence is Phosphoglycerol transferase I (763 aa).

4 helical membrane passes run 1-21, 26-46, 77-97, and 108-128; these read MSEL…AWKA, WWFA…ITLF, ILPG…LGWI, and FGYS…SPAF.

It belongs to the OpgB family.

The protein resides in the cell inner membrane. The catalysed reaction is a phosphatidylglycerol + a membrane-derived-oligosaccharide D-glucose = a 1,2-diacyl-sn-glycerol + a membrane-derived-oligosaccharide 6-(glycerophospho)-D-glucose.. It participates in glycan metabolism; osmoregulated periplasmic glucan (OPG) biosynthesis. In terms of biological role, transfers a phosphoglycerol residue from phosphatidylglycerol to the membrane-bound nascent glucan backbones. In Escherichia coli (strain UTI89 / UPEC), this protein is Phosphoglycerol transferase I.